The following is a 418-amino-acid chain: Trimethyllysine dioxygenase, mitochondrial (418 aa).

Residues histidine 239, aspartate 241, and histidine 386 each contribute to the Fe cation site.

This sequence belongs to the gamma-BBH/TMLD family. As to quaternary structure, homodimer. Requires Fe(2+) as cofactor. The cofactor is L-ascorbate.

The protein localises to the mitochondrion matrix. The catalysed reaction is N(6),N(6),N(6)-trimethyl-L-lysine + 2-oxoglutarate + O2 = (3S)-3-hydroxy-N(6),N(6),N(6)-trimethyl-L-lysine + succinate + CO2. It participates in amine and polyamine biosynthesis; carnitine biosynthesis. Functionally, converts trimethyllysine (TML) into hydroxytrimethyllysine (HTML). In Gallus gallus (Chicken), this protein is Trimethyllysine dioxygenase, mitochondrial (TMLHE).